A 240-amino-acid polypeptide reads, in one-letter code: Bidirectional sugar transporter SWEET5 (240 aa).

Residues 1–9 (MTDPHTART) lie on the Extracellular side of the membrane. Residues 10–30 (IVGIVGNVISFGLFCAPIPTM) form a helical membrane-spanning segment. The MtN3/slv 1 domain occupies 10-95 (IVGIVGNVIS…YVTIFFVFAT (86 aa)). The Cytoplasmic segment spans residues 31–45 (VKIWKMKSVSEFKPD). A helical membrane pass occupies residues 46–66 (PYVATVLNCMMWTFYGLPFVQ). At 67-72 (PDSLLV) the chain is on the extracellular side. A helical transmembrane segment spans residues 73 to 93 (ITINGTGLFMELVYVTIFFVF). The Cytoplasmic segment spans residues 94–103 (ATSPVRRKIT). The chain crosses the membrane as a helical span at residues 104–124 (IAMVIEVIFMAVVIFCTMYFL). Topologically, residues 125-131 (HTTKQRS) are extracellular. Residues 132-152 (MLIGILCIVFNVIMYAAPLTV) form a helical membrane-spanning segment. Residues 133–217 (LIGILCIVFN…IIYITYYKTT (85 aa)) enclose the MtN3/slv 2 domain. The Cytoplasmic portion of the chain corresponds to 153 to 165 (MKLVIKTKSVKYM). A helical transmembrane segment spans residues 166-186 (PFFLSLANFMNGVVWVIYACL). At 187 to 190 (KFDP) the chain is on the extracellular side. A helical transmembrane segment spans residues 191-211 (YILIPNGLGSLSGIIQLIIYI). The Cytoplasmic portion of the chain corresponds to 212 to 240 (TYYKTTNWNDDDEDKEKRYSNAGIELGQA).

It belongs to the SWEET sugar transporter family. In terms of assembly, forms homooligomers and heterooligomers with SWEET6, SWEET8, SWEET9, SWEET11 and SWEET12.

It localises to the cell membrane. In terms of biological role, mediates both low-affinity uptake and efflux of sugar across the plasma membrane. May play roles in nurturing the male gametophyte. The sequence is that of Bidirectional sugar transporter SWEET5 from Arabidopsis thaliana (Mouse-ear cress).